A 314-amino-acid polypeptide reads, in one-letter code: tRNA(Ile)-lysidine synthase (314 aa).

37–42 is a binding site for ATP; that stretch reads SGGPDS.

The protein belongs to the tRNA(Ile)-lysidine synthase family.

It localises to the cytoplasm. It carries out the reaction cytidine(34) in tRNA(Ile2) + L-lysine + ATP = lysidine(34) in tRNA(Ile2) + AMP + diphosphate + H(+). Its function is as follows. Ligates lysine onto the cytidine present at position 34 of the AUA codon-specific tRNA(Ile) that contains the anticodon CAU, in an ATP-dependent manner. Cytidine is converted to lysidine, thus changing the amino acid specificity of the tRNA from methionine to isoleucine. In Corynebacterium glutamicum (strain ATCC 13032 / DSM 20300 / JCM 1318 / BCRC 11384 / CCUG 27702 / LMG 3730 / NBRC 12168 / NCIMB 10025 / NRRL B-2784 / 534), this protein is tRNA(Ile)-lysidine synthase.